We begin with the raw amino-acid sequence, 160 residues long: Dysbindin domain-containing protein 1 (160 aa).

Ser3, Ser97, and Ser121 each carry phosphoserine. The segment at 95-160 (ADSDDENLAT…FLTVEEPKED (66 aa)) is disordered. Over residues 127–143 (TRAEQNREKQPPSDPER) the composition is skewed to basic and acidic residues.

It belongs to the dysbindin family.

The chain is Dysbindin domain-containing protein 1 (Dbndd1) from Mus musculus (Mouse).